Here is a 366-residue protein sequence, read N- to C-terminus: MMERTIETATKQYPLLLGDGAARALPRLLRSLACPPGTKLFIITDDAVAPLYLDEVRAMLAAAEYDVYAYIIPSGEAAKSFDNYYACQTAALQCSLDRRSVIIALGGGVVGDLAGFVAATYMRGIRYIQMPTTLLAHDSAVGGKVAINHPLGKNMIGAFHQPEAVVYDTTFLRTLPERELRSGFAEVIKHALIRDRRFYEWLRAEVKTLADLRGEALTYCIEKGIDIKASIVREDEKETSVRAHLNFGHTLGHALESELGYGTLTHGEAVAIGMLFAVFVSERLYGHSFAEHRFAEWFARYGFPVSLPTTVEADRLLEKMKGDKKAYAGTVRMVLLREIGDVEVVELEDDKLLAWLDEFAKQGGGR.

NAD(+)-binding positions include 74–79 (SGEAAK), 108–112 (GVVGD), 132–133 (TT), Lys144, Lys153, and 171–174 (FLRT). Residues Glu186, His249, and His266 each coordinate Zn(2+).

It belongs to the sugar phosphate cyclases superfamily. Dehydroquinate synthase family. The cofactor is Co(2+). Zn(2+) is required as a cofactor. It depends on NAD(+) as a cofactor.

It is found in the cytoplasm. It catalyses the reaction 7-phospho-2-dehydro-3-deoxy-D-arabino-heptonate = 3-dehydroquinate + phosphate. It participates in metabolic intermediate biosynthesis; chorismate biosynthesis; chorismate from D-erythrose 4-phosphate and phosphoenolpyruvate: step 2/7. In terms of biological role, catalyzes the conversion of 3-deoxy-D-arabino-heptulosonate 7-phosphate (DAHP) to dehydroquinate (DHQ). The polypeptide is 3-dehydroquinate synthase (Geobacillus thermodenitrificans (strain NG80-2)).